The primary structure comprises 181 residues: Translationally-controlled tumor protein homolog (181 aa).

One can recognise a TCTP domain in the interval 1-181 (MLIFKDAFTD…VKEALVEEKQ (181 aa)).

It belongs to the TCTP family.

Its subcellular location is the cytoplasm. Functionally, involved in calcium binding and microtubule stabilization. The chain is Translationally-controlled tumor protein homolog from Wuchereria bancrofti.